We begin with the raw amino-acid sequence, 273 residues long: WIMGHMVNAIAQIDEFVNLGANSIETDVSFDKNANPEYTYHGIPCDCGRTCTKWEYFNTFLGGLRKATTPGDSKYHEKLVLVVFDLKTGSLYDNQAYDAGTKLAKSLLQNYWNKGNNGGRAYIVLSIPNLDHYKLITGFKETLTKEEHPELMDKVGYDFSGNDDIGDVAKAYKKAGVTGHVWQSDGITNCLLRGLDRVRKAVANRDSSNGYINKVYYWTVDKRASTSDALDAGVDGIMTNYPDVIADVLSESVYTAKFRIATYDDNPWETFKN.

The active site involves His-5. Mg(2+)-binding residues include Glu-25 and Asp-27. His-41 (nucleophile) is an active-site residue. 2 disulfides stabilise this stretch: Cys-45-Cys-51 and Cys-47-Cys-190. Asp-85 contacts Mg(2+).

Belongs to the arthropod phospholipase D family. Class II subfamily. The cofactor is Mg(2+). As to expression, expressed by the venom gland.

It is found in the secreted. It catalyses the reaction an N-(acyl)-sphingosylphosphocholine = an N-(acyl)-sphingosyl-1,3-cyclic phosphate + choline. The enzyme catalyses an N-(acyl)-sphingosylphosphoethanolamine = an N-(acyl)-sphingosyl-1,3-cyclic phosphate + ethanolamine. It carries out the reaction a 1-acyl-sn-glycero-3-phosphocholine = a 1-acyl-sn-glycero-2,3-cyclic phosphate + choline. The catalysed reaction is a 1-acyl-sn-glycero-3-phosphoethanolamine = a 1-acyl-sn-glycero-2,3-cyclic phosphate + ethanolamine. In terms of biological role, dermonecrotic toxins cleave the phosphodiester linkage between the phosphate and headgroup of certain phospholipids (sphingolipid and lysolipid substrates), forming an alcohol (often choline) and a cyclic phosphate. This toxin acts on sphingomyelin (SM). It may also act on ceramide phosphoethanolamine (CPE), lysophosphatidylcholine (LPC) and lysophosphatidylethanolamine (LPE), but not on lysophosphatidylserine (LPS), and lysophosphatidylglycerol (LPG). It acts by transphosphatidylation, releasing exclusively cyclic phosphate products as second products. Induces dermonecrosis, hemolysis, increased vascular permeability, edema, inflammatory response, and platelet aggregation. The polypeptide is Dermonecrotic toxin LsaSicTox-alphaIB1aii (Loxosceles sabina (Tucson recluse spider)).